Reading from the N-terminus, the 121-residue chain is Outer membrane lipoprotein BBA14 (121 aa).

An N-terminal signal peptide occupies residues 1 to 19; that stretch reads MQIKNFPFLFLLNSLIIFS. Residue Cys20 is the site of N-palmitoyl cysteine attachment. Cys20 carries the S-diacylglycerol cysteine lipid modification.

It is found in the cell outer membrane. In terms of biological role, outer membrane lipoprotein that could act as a component of a potential toxin-antitoxin system in B.burgdorferi which could serve as a plasmid stabilization mechanism in a growing bacterial population. This Borreliella burgdorferi (strain ATCC 35210 / DSM 4680 / CIP 102532 / B31) (Borrelia burgdorferi) protein is Outer membrane lipoprotein BBA14.